Consider the following 439-residue polypeptide: Serine/threonine-protein kinase 2 (439 aa).

The region spanning 87 to 439 is the Protein kinase domain; the sequence is NDDFYHISTG…IFSDWINGRN (353 aa). Residues 93–101 and lysine 117 each bind ATP; that span reads ISTGGYGIV. The Proton acceptor role is filled by aspartate 307.

Belongs to the protein kinase superfamily. Ser/Thr protein kinase family. Poxviruses subfamily. Post-translationally, phosphorylated in vivo. Autophosphorylated in vitro.

It localises to the host endoplasmic reticulum. The protein resides in the host endoplasmic reticulum-Golgi intermediate compartment. It catalyses the reaction L-seryl-[protein] + ATP = O-phospho-L-seryl-[protein] + ADP + H(+). The catalysed reaction is L-threonyl-[protein] + ATP = O-phospho-L-threonyl-[protein] + ADP + H(+). Functionally, essential serine-protein kinase involved in the early stage of virion morphogenesis. The chain is Serine/threonine-protein kinase 2 (OPG054) from Homo sapiens (Human).